A 245-amino-acid chain; its full sequence is Probable transcriptional regulatory protein CPR_1922 (245 aa).

Belongs to the TACO1 family.

It localises to the cytoplasm. The polypeptide is Probable transcriptional regulatory protein CPR_1922 (Clostridium perfringens (strain SM101 / Type A)).